The chain runs to 91 residues: Small ribosomal subunit protein uS19 (91 aa).

The protein belongs to the universal ribosomal protein uS19 family.

In terms of biological role, protein S19 forms a complex with S13 that binds strongly to the 16S ribosomal RNA. In Saccharophagus degradans (strain 2-40 / ATCC 43961 / DSM 17024), this protein is Small ribosomal subunit protein uS19.